The primary structure comprises 497 residues: PHD finger protein 10 (497 aa).

Residues 1-61 are disordered; that stretch reads MAAAGPGAAL…SSRSCETSSQ (61 aa). Phosphoserine is present on residues Ser11, Ser35, and Ser49. The segment at 88 to 184 is essential to induce neural progenitor proliferation; that stretch reads MLQEQVSEYL…HYKEYSQMQQ (97 aa). Positions 88–294 are SAY; sequence MLQEQVSEYL…PPLDPELPAL (207 aa). Residue Lys240 forms a Glycyl lysine isopeptide (Lys-Gly) (interchain with G-Cter in SUMO2) linkage. The residue at position 269 (Ser269) is a Phosphoserine. The segment covering 284 to 295 has biased composition (low complexity); sequence EPPLDPELPALD. The disordered stretch occupies residues 284–367; it reads EPPLDPELPA…KRSVLSKSVP (84 aa). An essential to induce neural progenitor proliferation region spans residues 291-333; sequence LPALDSDGDSDDGEDGGGDEKRKNKGTSDSSSGNVSEGDSPPD. Residues Ser296, Ser300, Ser326, and Ser330 each carry the phosphoserine modification. Positions 296 to 307 are enriched in acidic residues; it reads SDGDSDDGEDGG. Positions 317 to 327 are enriched in polar residues; it reads TSDSSSGNVSE. Over residues 344–358 the composition is skewed to basic and acidic residues; it reads KSKDKMATPRKDGSK. A PHD-type 1; degenerate zinc finger spans residues 378–435; it reads LCGICLKGKESNKKGKAESLIHCSQCDNSGHPSCLDMTMELVSMIKTYPWQCMECKTC. Lys384 participates in a covalent cross-link: Glycyl lysine isopeptide (Lys-Gly) (interchain with G-Cter in SUMO2). A PHD-type 2; degenerate zinc finger spans residues 437–480; it reads ICGQPHHEEEMMFCDVCDRGYHTFCVGLGAIPSGRWICDCCQRA.

The protein belongs to the SAYP family. Component of neural progenitors-specific chromatin remodeling complex (npBAF complex) composed of at least, ARID1A/BAF250A or ARID1B/BAF250B, SMARCD1/BAF60A, SMARCD3/BAF60C, SMARCA2/BRM/BAF190B, SMARCA4/BRG1/BAF190A, SMARCB1/BAF47, SMARCC1/BAF155, SMARCE1/BAF57, SMARCC2/BAF170, PHF10/BAF45A, ACTL6A/BAF53A and actin. Interacts with ACTL6A/BAF53A, SMARCA2/BRM/BAF190B, SMARCA4/BRG1/BAF190A and PBRM1/BAF180.

Its subcellular location is the nucleus. Functionally, involved in transcription activity regulation by chromatin remodeling. Belongs to the neural progenitors-specific chromatin remodeling complex (npBAF complex) and is required for the proliferation of neural progenitors. During neural development a switch from a stem/progenitor to a post-mitotic chromatin remodeling mechanism occurs as neurons exit the cell cycle and become committed to their adult state. The transition from proliferating neural stem/progenitor cells to post-mitotic neurons requires a switch in subunit composition of the npBAF and nBAF complexes. As neural progenitors exit mitosis and differentiate into neurons, npBAF complexes which contain ACTL6A/BAF53A and PHF10/BAF45A, are exchanged for homologous alternative ACTL6B/BAF53B and DPF1/BAF45B or DPF3/BAF45C subunits in neuron-specific complexes (nBAF). The npBAF complex is essential for the self-renewal/proliferative capacity of the multipotent neural stem cells. The nBAF complex along with CREST plays a role regulating the activity of genes essential for dendrite growth. The sequence is that of PHD finger protein 10 (Phf10) from Rattus norvegicus (Rat).